Consider the following 343-residue polypeptide: Anthranilate phosphoribosyltransferase (343 aa).

Residues Gly-84, 87–88 (GD), Thr-92, 94–97 (NIST), 112–120 (KHGNRSVSS), and Ser-124 each bind 5-phospho-alpha-D-ribose 1-diphosphate. Residue Gly-84 participates in anthranilate binding. Ser-96 serves as a coordination point for Mg(2+). Residue Asn-115 coordinates anthranilate. Arg-170 lines the anthranilate pocket. Asp-229 and Glu-230 together coordinate Mg(2+).

It belongs to the anthranilate phosphoribosyltransferase family. Homodimer. Mg(2+) is required as a cofactor.

It carries out the reaction N-(5-phospho-beta-D-ribosyl)anthranilate + diphosphate = 5-phospho-alpha-D-ribose 1-diphosphate + anthranilate. The protein operates within amino-acid biosynthesis; L-tryptophan biosynthesis; L-tryptophan from chorismate: step 2/5. In terms of biological role, catalyzes the transfer of the phosphoribosyl group of 5-phosphorylribose-1-pyrophosphate (PRPP) to anthranilate to yield N-(5'-phosphoribosyl)-anthranilate (PRA). The polypeptide is Anthranilate phosphoribosyltransferase (Stenotrophomonas maltophilia (strain K279a)).